Consider the following 1031-residue polypeptide: MEEQVANAIEIAGNPTSDSTLKAQAFDYLNQLRTDPSGWQVCLSLFTKDPPQSHFIRHVSLEVVNSAAQAGLIDLRSLGFVRDRLLAYLRQVYGREGSNPDPPNIQNKIAQTITFLFSALYGNGWESFFDDLLSLTHKSPSSTTRDNPLGIIFYLRVINSIHDEIGDVLVSRSRAEQERANALKDLIRVRDMQKIASSWQEILSQWMDGDDLIVEMSLKAVGSWVSWIDIGLVVNQTMLDLLFQQLGRAQKAELREGEDKVRDAAVDVFTEIIGKKMKAEDKIDMIAFLNLDNVVGQISSSPPLYANRFTSKYDTDLAETVAKLVNTTVTDIVRALEQETVSAQCKEKANGLLQVFLPHILRYFSDEYDEVCSTVIPCVSDLLSYLRKMAKSNPSIASQHSSILLPILKAIIQKMRYDETASWGDDDDQTDEAEFQELRKRLGTLQQIVAAVDERLYMEAVSEVVATTFENMRQSGAQLDWRDLDLALHEMYLFGDSATKSGSLYNKGQPSGPSAERLVEMMLRMVESDIRSFTHPATQLQYMEICVRYSSFFHTHTHLIPGVLESFLQLAHHPMKKVKTRAWYLFQRLVKQLRAYIDNVAQTVVEALGDLLVIQAELPSESSDGDEMSSEDHEGSTDAVFNSQLYLFEAVGIICSIPTIPADKQVLYAQSVLSPVFVDMEKNLGSAKSGDARAVLQIHHDIMALGTLARGFSDWQPGTSSPATQLPAPEVSEAFSQVSEATLVALESLKASFDIRTASRFAFSRLIGVLGSRILPQLPRWIDGLLTQTSSRDEMALFLRLLDQVIFGFKGEIYNILDALLMPFLQRVFSGIADPTSGTDDEIHLAELKREYLNFLLAVLNNDLGAVIISERNQPMFDTVITTIEHFAKDAEDFTTAKMAFSVLSRMGSAWGGPDIAPAASNGPSTSQVALPGFGQFMITRFSPLCWALPATPSFNAKDAQAKQVLAEAGGLQRTIYSKMGMEYIEYLRDRELPGMGMGADLVEEYVGTLSRLDLRGFRQFFPQFIQRLSA.

This sequence belongs to the exportin family.

It localises to the nucleus. The protein resides in the cytoplasm. TRNA nucleus export receptor which facilitates tRNA translocation across the nuclear pore complex. Involved in pre-tRNA splicing, probably by affecting the interaction of pre-tRNA with splicing endonuclease. In Emericella nidulans (strain FGSC A4 / ATCC 38163 / CBS 112.46 / NRRL 194 / M139) (Aspergillus nidulans), this protein is Exportin-T (los1).